Here is a 245-residue protein sequence, read N- to C-terminus: tRNA pseudouridine synthase A (245 aa).

Asp52 (nucleophile) is an active-site residue. Tyr111 contacts substrate.

The protein belongs to the tRNA pseudouridine synthase TruA family. As to quaternary structure, homodimer.

The catalysed reaction is uridine(38/39/40) in tRNA = pseudouridine(38/39/40) in tRNA. Its function is as follows. Formation of pseudouridine at positions 38, 39 and 40 in the anticodon stem and loop of transfer RNAs. The polypeptide is tRNA pseudouridine synthase A (Rhodopseudomonas palustris (strain BisB18)).